The primary structure comprises 287 residues: 4,4'-diapophytoene synthase (287 aa).

(2E,6E)-farnesyl diphosphate-binding positions include 18–21, tyrosine 41, and arginine 45; that span reads HSKS. Residues aspartate 48 and aspartate 52 each contribute to the Mg(2+) site. Glutamine 165 contacts (2E,6E)-farnesyl diphosphate. Asparagine 168 contacts Mg(2+). Arginine 171 contributes to the (2E,6E)-farnesyl diphosphate binding site. A Mg(2+)-binding site is contributed by aspartate 172. Residue tyrosine 248 participates in (2E,6E)-farnesyl diphosphate binding.

The protein belongs to the phytoene/squalene synthase family. CrtM subfamily. Mg(2+) is required as a cofactor.

The enzyme catalyses 2 (2E,6E)-farnesyl diphosphate = 15-cis-4,4'-diapophytoene + 2 diphosphate. Its pathway is carotenoid biosynthesis; staphyloxanthin biosynthesis; staphyloxanthin from farnesyl diphosphate: step 1/5. Involved in the biosynthesis of the yellow-orange carotenoid staphyloxanthin, which plays a role in the virulence via its protective function against oxidative stress. Catalyzes the head-to-head condensation of two molecules of farnesyl diphosphate (FPP) into the colorless C(30) carotenoid 4,4'-diapophytoene (dehydrosqualene). The polypeptide is 4,4'-diapophytoene synthase (crtM) (Staphylococcus aureus (strain bovine RF122 / ET3-1)).